The primary structure comprises 100 residues: MDINRAIRVAVDTGNVVLGTKQAIKNIKHGEGQLVIVADNCAKDVREDIFYYTQLSETPVYTHQATSIELGAICGKPFPVSALLVLEPGNSAILNVNNEE.

The protein belongs to the eukaryotic ribosomal protein eL30 family.

The sequence is that of Large ribosomal subunit protein eL30 from Methanococcus maripaludis (strain DSM 14266 / JCM 13030 / NBRC 101832 / S2 / LL).